Consider the following 562-residue polypeptide: Probable sesquiterpene synthase (562 aa).

Residues Asp315, Asp319, and Glu467 each contribute to the Mg(2+) site. Positions 315-319 (DDIYD) match the DDXXD motif motif.

The protein belongs to the terpene synthase family. Tpsa subfamily. It depends on Mg(2+) as a cofactor. Requires Mn(2+) as cofactor.

In terms of biological role, sesquiterpene synthase. The polypeptide is Probable sesquiterpene synthase (STPS) (Santalum murrayanum (Bitter quandong)).